A 215-amino-acid polypeptide reads, in one-letter code: Small ribosomal subunit protein uS5 (215 aa).

The tract at residues 1 to 62 (MTDSSPQSNP…QERDSEWQER (62 aa)) is disordered. Residues 9 to 28 (NPNAVPGAADVPAAAEGQQQ) are compositionally biased toward low complexity. Positions 29 to 61 (EQRRGGGRGERGDRRGGRRGDRRNQERDSEWQE) are enriched in basic and acidic residues. Residues 59-122 (WQERVVQIRR…ADGKKHLVKV (64 aa)) form the S5 DRBM domain.

The protein belongs to the universal ribosomal protein uS5 family. Part of the 30S ribosomal subunit. Contacts proteins S4 and S8.

In terms of biological role, with S4 and S12 plays an important role in translational accuracy. Functionally, located at the back of the 30S subunit body where it stabilizes the conformation of the head with respect to the body. This is Small ribosomal subunit protein uS5 from Parasynechococcus marenigrum (strain WH8102).